A 193-amino-acid chain; its full sequence is Sporulation-specific transcriptional regulator GerR (193 aa).

An HTH myb-type domain is found at 1 to 61; sequence MTITRQDAWT…RWNSYVRKQY (61 aa). The segment at residues 35-57 is a DNA-binding region (H-T-H motif); the sequence is FEEVGRALTRTAAACGFRWNSYV. A coiled-coil region spans residues 122–177; it reads AQEFQLEREKLKEQIQSLQKELEDLRSENQTLRNQLEMTEEDYKALIDIMDRARKM.

This sequence belongs to the RsfA transcriptional regulator family.

Transcriptional factor that regulates the expression of several late sporulation genes. Controls genes of both sigma-E and sigma-K regulons, acting alone on some genes and in conjunction with SpoIIID or GerE on others. Regulates, directly or indirectly, the expression of genes encoding coat proteins such as cgeA, cotB, cotC, cotG, cotU and cotY. Controls late sporulation genes in two ways: directly, by binding to the promoter region of genes such as cotB, cotU and spoVIF, and acting directly on their transcription, and indirectly, through the activation of SpoVIF, which stabilizes the transcriptional activator GerE and consequently induces the expression of the GerE-dependent genes, such as cotC and cotG. Its effect is strongly positive on spoVIF, cotC, and cotG, weakly positive on cotB, and negative on cotU. This Bacillus subtilis (strain 168) protein is Sporulation-specific transcriptional regulator GerR.